The following is a 428-amino-acid chain: S-adenosylmethionine synthase (428 aa).

H14 serves as a coordination point for ATP. D16 is a Mg(2+) binding site. E42 is a binding site for K(+). The L-methionine site is built by E55 and Q98. Residues Q98–R108 are flexible loop. ATP is bound by residues D165 to K167, K251 to F252, D260, R266 to K267, A283, and K287. Residue D260 participates in L-methionine binding. Position 291 (K291) interacts with L-methionine.

This sequence belongs to the AdoMet synthase family. As to quaternary structure, homotetramer; dimer of dimers. Mg(2+) is required as a cofactor. The cofactor is K(+).

It localises to the cytoplasm. It carries out the reaction L-methionine + ATP + H2O = S-adenosyl-L-methionine + phosphate + diphosphate. Its pathway is amino-acid biosynthesis; S-adenosyl-L-methionine biosynthesis; S-adenosyl-L-methionine from L-methionine: step 1/1. Its function is as follows. Catalyzes the formation of S-adenosylmethionine (AdoMet) from methionine and ATP. The overall synthetic reaction is composed of two sequential steps, AdoMet formation and the subsequent tripolyphosphate hydrolysis which occurs prior to release of AdoMet from the enzyme. This chain is S-adenosylmethionine synthase, found in Parabacteroides distasonis (strain ATCC 8503 / DSM 20701 / CIP 104284 / JCM 5825 / NCTC 11152).